Consider the following 209-residue polypeptide: Response regulator protein VraR (209 aa).

The Response regulatory domain occupies 4–120; sequence KVLFVDDHEM…DIADAVRKTS (117 aa). Aspartate 55 carries the post-translational modification 4-aspartylphosphate. The HTH luxR-type domain maps to 141–206; sequence RAELYEMLTE…QAVIYAFQHN (66 aa). Residues 165-184 constitute a DNA-binding region (H-T-H motif); the sequence is NQEIASASHITIKTVKTHVS.

As to quaternary structure, homodimer. Phosphorylated by VraS. Phosphorylation state of VraR controls dimerization of the protein.

Its function is as follows. Member of the two-component regulatory system VraS/VraR involved in the control of the cell wall peptidoglycan biosynthesis. Upon cellular stress, the histidine kinase VraS transfers the phosphoryl group onto VraR. Upon phosphorylation, VraR dimerizes at the N-terminal domain. In turn, phosphorylation-induced dimerization expand and enhance the VraR binding to its own promoter leading to increased expression and subsequent modulation of as many as 40 genes, which ultimately constitute the S.aureus response to cell wall damage. In addition, inhibits the host autophagic flux and delays the early stage of autophagosome formation, thereby promoting bacterial survival. Facilitates the ability of S.aureus to resist host polymorphonuclear leukocytes-mediated phagocytosis and killing thus contributing to immune evasion. This is Response regulator protein VraR (vraR) from Staphylococcus aureus (strain NCTC 8325 / PS 47).